A 425-amino-acid chain; its full sequence is Bifunctional phosphoribosylaminoimidazole carboxylase/phosphoribosylaminoimidazole succinocarboxamide synthetase (425 aa).

Ala-2 carries the N-acetylalanine modification. The tract at residues 2 to 260 (ATAVVVNIGK…WVADRVELLL (259 aa)) is SAICAR synthetase domain. Tyr-22 carries the phosphotyrosine modification. Position 36 is an N6-acetyllysine (Lys-36). Ser-107 is subject to Phosphoserine. At Thr-238 the chain carries Phosphothreonine. At Lys-247 the chain carries N6-acetyllysine. Residues 261–266 (KSDSQC) are linker. The tract at residues 267–425 (RVVVLMGSTS…ADKKVRQCNL (159 aa)) is AIR carboxylase domain. The residue at position 274 (Ser-274) is a Phosphoserine. Residue Ser-332 coordinates CO2.

It in the N-terminal section; belongs to the SAICAR synthetase family. In the C-terminal section; belongs to the AIR carboxylase family. Class II subfamily. As to quaternary structure, homooctamer.

The catalysed reaction is 5-amino-1-(5-phospho-D-ribosyl)imidazole-4-carboxylate + L-aspartate + ATP = (2S)-2-[5-amino-1-(5-phospho-beta-D-ribosyl)imidazole-4-carboxamido]succinate + ADP + phosphate + 2 H(+). It carries out the reaction 5-amino-1-(5-phospho-D-ribosyl)imidazole-4-carboxylate + H(+) = 5-amino-1-(5-phospho-beta-D-ribosyl)imidazole + CO2. Its pathway is purine metabolism; IMP biosynthesis via de novo pathway; 5-amino-1-(5-phospho-D-ribosyl)imidazole-4-carboxamide from 5-amino-1-(5-phospho-D-ribosyl)imidazole-4-carboxylate: step 1/2. It functions in the pathway purine metabolism; IMP biosynthesis via de novo pathway; 5-amino-1-(5-phospho-D-ribosyl)imidazole-4-carboxylate from 5-amino-1-(5-phospho-D-ribosyl)imidazole (carboxylase route): step 1/1. Its function is as follows. Bifunctional phosphoribosylaminoimidazole carboxylase and phosphoribosylaminoimidazole succinocarboxamide synthetase catalyzing two reactions of the de novo purine biosynthetic pathway. The sequence is that of Bifunctional phosphoribosylaminoimidazole carboxylase/phosphoribosylaminoimidazole succinocarboxamide synthetase from Mus musculus (Mouse).